The sequence spans 530 residues: UDP-glucuronosyltransferase 2B7 (530 aa).

The first 17 residues, Met1–Cys17, serve as a signal peptide directing secretion. A glycan (N-linked (GlcNAc...) asparagine) is linked at Asn316. UDP-alpha-D-glucuronate contacts are provided by residues Thr374–Gly380 and Glu400. Residues Ile496–Phe516 form a helical membrane-spanning segment.

This sequence belongs to the UDP-glycosyltransferase family.

The protein localises to the endoplasmic reticulum membrane. It carries out the reaction glucuronate acceptor + UDP-alpha-D-glucuronate = acceptor beta-D-glucuronoside + UDP + H(+). The catalysed reaction is 17alpha-estradiol + UDP-alpha-D-glucuronate = 17alpha-estradiol 17-O-(beta-D-glucuronate) + UDP + H(+). The enzyme catalyses 17beta-estradiol + UDP-alpha-D-glucuronate = 17beta-estradiol 17-O-(beta-D-glucuronate) + UDP + H(+). It catalyses the reaction 2-hydroxy-17beta-estradiol + UDP-alpha-D-glucuronate = 2-hydroxy-17beta-estradiol 3-O-(beta-D-glucuronate) + UDP + H(+). It carries out the reaction 4-hydroxy-17beta-estradiol + UDP-alpha-D-glucuronate = 17beta-estradiol 4-O-(beta-D-glucuronate) + UDP + H(+). The catalysed reaction is 4-hydroxyestrone + UDP-alpha-D-glucuronate = estrone 4-O-(beta-D-glucuronate) + UDP + H(+). The enzyme catalyses 16alpha-hydroxyestrone + UDP-alpha-D-glucuronate = 16alpha-hydroxyestrone 16-O-(beta-D-glucuronate) + UDP + H(+). It catalyses the reaction 16alpha,17beta-estriol + UDP-alpha-D-glucuronate = 16alpha,17beta-estriol 16-O-(beta-D-glucuronate) + UDP + H(+). It carries out the reaction 16beta,17beta-estriol + UDP-alpha-D-glucuronate = 16beta,17beta-estriol 16-O-(beta-D-glucuronate) + UDP + H(+). The catalysed reaction is 16alpha,17alpha-estriol + UDP-alpha-D-glucuronate = 16alpha,17alpha-estriol 16-O-(beta-D-glucuronate) + UDP + H(+). The enzyme catalyses 16alpha,17alpha-estriol + UDP-alpha-D-glucuronate = 16alpha,17alpha-estriol 17-O-(beta-D-glucuronate) + UDP + H(+). It catalyses the reaction epitestosterone + UDP-alpha-D-glucuronate = epitestosterone 17-O-(beta-D-glucuronate) + UDP + H(+). It carries out the reaction hyodeoxycholate + UDP-alpha-D-glucuronate = hyodeoxycholate 6-O-(beta-D-glucuronate) + UDP + H(+). The catalysed reaction is hyocholate + UDP-alpha-D-glucuronate = hyocholate 6-O-(beta-D-glucuronate) + UDP + H(+). The enzyme catalyses all-trans-retinoate + UDP-alpha-D-glucuronate = all-trans-retinoyl-1-O-(beta-D-glucuronate) + UDP. It catalyses the reaction all-trans-4-hydroxyretinoate + UDP-alpha-D-glucuronate = all-trans-4-hydroxy-4-O-(beta-D-glucuronide)-retinoate + UDP + H(+). It carries out the reaction (E)-ferulate + UDP-alpha-D-glucuronate = (E)-ferulic acid beta-D-glucuronate ester + UDP. The catalysed reaction is 8-iso-prostaglandin F2alpha + UDP-alpha-D-glucuronate = 8-iso-prostaglandin F2alpha-glucuronide + UDP + H(+). The enzyme catalyses 5-epi-5-F2t-IsoP + UDP-alpha-D-glucuronate = 5-epi-5-F2t-IsoP-glucuronide + UDP + H(+). It catalyses the reaction (5Z,8Z,11Z,14Z)-eicosatetraenoate + UDP-alpha-D-glucuronate = O-[(5Z),(8Z),(11Z),(14Z)-eicosatetraenoyl]-beta-D-glucuronate + UDP. It carries out the reaction 15-hydroxy-(5Z,8Z,11Z,13E)-eicosatetraenoate + UDP-alpha-D-glucuronate = 15-O-(beta-D-glucuronosyl)-(5Z,8Z,11Z,14Z)-eicosatetraenoate + UDP + H(+). The catalysed reaction is 20-hydroxy-(5Z,8Z,11Z,14Z)-eicosatetraenoate + UDP-alpha-D-glucuronate = 20-O-(beta-D-glucuronosyl)-(5Z,8Z,11Z,14Z)-eicosatetraenoate + UDP + H(+). The enzyme catalyses (E)-ferulate + UDP-alpha-D-glucuronate = (E)-4-O-(beta-D-glucuronosyl)-ferulate + UDP + H(+). It catalyses the reaction prostaglandin B1 + UDP-alpha-D-glucuronate = 15-O-(beta-D-glucuronosyl)-prostaglandin B1 + UDP + H(+). It carries out the reaction mycophenolate + UDP-alpha-D-glucuronate = mycophenolic acid O-acyl-beta-D-glucuronide + UDP. The catalysed reaction is losartan + UDP-alpha-D-glucuronate = losartan-2-N-beta-D-glucuronide + UDP. The enzyme catalyses candesartan + UDP-alpha-D-glucuronate = candesartan O-beta-D-glucuronoside + UDP. It catalyses the reaction candesartan + UDP-alpha-D-glucuronate = candesartan-2-N-beta-D-glucuronide + UDP. It carries out the reaction zolasartan + UDP-alpha-D-glucuronate = zolarsartan O-beta-D-glucuronoside + UDP. Functionally, UDP-glucuronosyltransferase (UGT) that catalyzes phase II biotransformation reactions in which lipophilic substrates are conjugated with glucuronic acid to increase the metabolite's water solubility, thereby facilitating excretion into either the urine or bile. Essential for the elimination and detoxification of drugs, xenobiotics and endogenous compounds. Catalyzes the glucuronidation of endogenous steroid hormones such as androgens (epitestosterone, androsterone) and estrogens (estradiol, epiestradiol, estriol, catechol estrogens). Also regulates the levels of retinoic acid, a major metabolite of vitamin A involved in apoptosis, cellular growth and differentiation, and embryonic development. Contributes to bile acid (BA) detoxification by catalyzing the glucuronidation of BA substrates, which are natural detergents for dietary lipids absorption. Involved in the glucuronidation of arachidonic acid (AA) and AA-derived eicosanoids including 15-HETE, 20-HETE, PGE2, PGB1 and F2-isoprostanes (8-iso-PGF2alpha and 5-epi-5-F2t-IsoP). Involved in the glucuronidation of the phytochemical ferulic acid at the phenolic or the carboxylic acid group. Involved in the glucuronidation of the AGTR1 angiotensin receptor antagonist losartan, caderastan and zolarsatan, drugs which can inhibit the effect of angiotensin II. Also metabolizes mycophenolate, an immunosuppressive agent. The sequence is that of UDP-glucuronosyltransferase 2B7 from Rattus norvegicus (Rat).